The primary structure comprises 403 residues: uncharacterized protein (403 aa).

Helical transmembrane passes span 31-51 (FLIA…IGSF), 186-206 (LPIG…GIIV), 238-258 (ISAV…PIII), 268-288 (LAIF…SLLC), 303-323 (LISP…TIMV), and 355-375 (LIEI…SFIL).

The protein to B.subtilis YhaP.

It localises to the cell membrane. This is an uncharacterized protein from Methanocaldococcus jannaschii (strain ATCC 43067 / DSM 2661 / JAL-1 / JCM 10045 / NBRC 100440) (Methanococcus jannaschii).